The chain runs to 144 residues: Small polypeptide DEVIL 18 (144 aa).

The span at 30–58 (SFSTKTSSSSSKPVFTRSFSTKPTSYSSS) shows a compositional bias: low complexity. The tract at residues 30–89 (SFSTKTSSSSSKPVFTRSFSTKPTSYSSSEPIFRRSFSAKPTSSKSPFLSRSGSTKCPVD) is disordered. The chain crosses the membrane as a helical span at residues 42 to 58 (PVFTRSFSTKPTSYSSS). Residues 68–84 (AKPTSSKSPFLSRSGST) show a composition bias toward polar residues. The segment at 108 to 139 (SVTRKCRNMAKEHKSRFYIMKRCVLMLVCWHK) is required for DVL/RTFL small polypeptide activity.

It belongs to the DVL/RTFL small polypeptides family.

The protein localises to the cell membrane. In terms of biological role, small polypeptide acting as a regulatory molecule which coordinates cellular responses required for differentiation, growth and development, probably by restricting polar cell proliferation in lateral organs and coordinating socket cell recruitment and differentiation at trichome sites. The sequence is that of Small polypeptide DEVIL 18 from Arabidopsis thaliana (Mouse-ear cress).